The following is a 129-amino-acid chain: Small ribosomal subunit protein uS11 (129 aa).

The protein belongs to the universal ribosomal protein uS11 family. As to quaternary structure, part of the 30S ribosomal subunit. Interacts with proteins S7 and S18. Binds to IF-3.

Functionally, located on the platform of the 30S subunit, it bridges several disparate RNA helices of the 16S rRNA. Forms part of the Shine-Dalgarno cleft in the 70S ribosome. This is Small ribosomal subunit protein uS11 from Mesorhizobium japonicum (strain LMG 29417 / CECT 9101 / MAFF 303099) (Mesorhizobium loti (strain MAFF 303099)).